Here is a 543-residue protein sequence, read N- to C-terminus: MGAYLSQPNTVKCSGDGVGASRLPLPYGFSAMQGWRVSMEDAHNCIPELDSETAMFSVYDGHGGEEVALYCAKYLPDIIKDQKAYKEGKLQKALEDAFLAIDAKLTTEEVIKELAQIAGRPTEDEDEKEKVADEDDVDNEEAALLHEEATMTIEELLTRYGQNCHKGAPHSKSGAGTGEEPGSQGLNGEAGPEDPSRETSAEENGPTAKAHTGLSSNSECGTEAGQGGEPGTPTGEAGPSCSSASDKLPRVAKSKFFEDSEDESDEAEEEEEDSEECSEEEDGYSSEEAENEEDEDDTEEAEEDDEEEEMMVPGMEGKEEPGSDSGTTAVVALIRGKQLIVANAGDSRCVVSEAGKALDMSYDHKPEDEVELARIKNAGGKVTMDGRVNGGLNLSRAIGDHFYKRNKNLPPEEQMISALPDIKVLTLTDDHEFMVIACDGIWNVMSSQEVIDFIQSKISQRDENGELRLLSSIVEELLDQCLAPDTSGDGTGCDNMTCIIICFKPRNTAAPQPESGKRKLEEVLSTEGAEENGNSDKKKAKRD.

The N-myristoyl glycine moiety is linked to residue Gly2. Arg22 carries the post-translational modification Omega-N-methylarginine. The region spanning Pro26–Phe503 is the PPM-type phosphatase domain. Asp60 and Gly61 together coordinate Mn(2+). Disordered stretches follow at residues Gln116–Asn139 and Asn163–Gly326. Phosphothreonine is present on Thr122. Residues Glu123–Asn139 show a composition bias toward acidic residues. A Phosphoserine modification is found at Ser183. Residues Asp259–Met310 are compositionally biased toward acidic residues. At Lys381 the chain carries N6-acetyllysine. Mn(2+)-binding residues include Asp439 and Asp494. The disordered stretch occupies residues Thr508–Asp543. At Ser525 the chain carries Phosphoserine.

The protein belongs to the PP2C family. As to quaternary structure, interacts with NOL3; may dephosphorylate NOL3. Requires Mg(2+) as cofactor. Mn(2+) is required as a cofactor.

The protein localises to the cytoplasm. The protein resides in the membrane. It carries out the reaction O-phospho-L-seryl-[protein] + H2O = L-seryl-[protein] + phosphate. It catalyses the reaction O-phospho-L-threonyl-[protein] + H2O = L-threonyl-[protein] + phosphate. This is Protein phosphatase 1G (PPM1G) from Bos taurus (Bovine).